The following is an 842-amino-acid chain: Envelope glycoprotein H (842 aa).

The signal sequence occupies residues 1-20 (MRRPLCAALLAAAVLALAAG). The Virion surface portion of the chain corresponds to 21–802 (APAAARGGAG…AGHEAPTFSP (782 aa)). Residues N77 and N112 are each glycosylated (N-linked (GlcNAc...) asparagine; by host). The segment at 240 to 303 (ERAAARLAVG…AAGPQRRAYV (64 aa)) is interaction with gL. 4 N-linked (GlcNAc...) asparagine; by host glycosylation sites follow: N617, N666, N760, and N783. The chain crosses the membrane as a helical span at residues 803–823 (AYVWASVGGALVAGTTIYAIA). At 824–842 (KMLCSSVPLARGYSSVPVF) the chain is on the intravirion side.

Belongs to the herpesviridae glycoprotein H family. As to quaternary structure, interacts with glycoprotein L (gL); this interaction is necessary for the correct processing and cell surface expression of gH. The heterodimer gH/gL seems to interact with gB trimers during fusion. Post-translationally, N-glycosylated, O-glycosylated, and sialylated.

The protein localises to the virion membrane. Its subcellular location is the host cell membrane. It localises to the host endosome membrane. In terms of biological role, the heterodimer glycoprotein H-glycoprotein L is required for the fusion of viral and plasma membranes leading to virus entry into the host cell. Following initial binding to host receptor, membrane fusion is mediated by the fusion machinery composed of gB and the heterodimer gH/gL. May also be involved in the fusion between the virion envelope and the outer nuclear membrane during virion morphogenesis. This is Envelope glycoprotein H from Bos taurus (Bovine).